The sequence spans 521 residues: Glycogen synthase (521 aa).

Residue K18 participates in ADP-alpha-D-glucose binding.

It belongs to the glycosyltransferase 1 family. Bacterial/plant glycogen synthase subfamily.

It carries out the reaction [(1-&gt;4)-alpha-D-glucosyl](n) + ADP-alpha-D-glucose = [(1-&gt;4)-alpha-D-glucosyl](n+1) + ADP + H(+). Its pathway is glycan biosynthesis; glycogen biosynthesis. Synthesizes alpha-1,4-glucan chains using ADP-glucose. The protein is Glycogen synthase of Bordetella petrii (strain ATCC BAA-461 / DSM 12804 / CCUG 43448).